The sequence spans 116 residues: Large ribosomal subunit protein bL19 (116 aa).

Belongs to the bacterial ribosomal protein bL19 family.

Its function is as follows. This protein is located at the 30S-50S ribosomal subunit interface and may play a role in the structure and function of the aminoacyl-tRNA binding site. The sequence is that of Large ribosomal subunit protein bL19 from Clostridioides difficile (strain 630) (Peptoclostridium difficile).